The following is a 425-amino-acid chain: Glutamyl-tRNA reductase (425 aa).

Residues 49–52 (TCNR), Ser107, 112–114 (EPQ), and Gln118 contribute to the substrate site. Cys50 serves as the catalytic Nucleophile. Position 187–192 (187–192 (GAGETI)) interacts with NADP(+).

Belongs to the glutamyl-tRNA reductase family. Homodimer.

The enzyme catalyses (S)-4-amino-5-oxopentanoate + tRNA(Glu) + NADP(+) = L-glutamyl-tRNA(Glu) + NADPH + H(+). It participates in porphyrin-containing compound metabolism; protoporphyrin-IX biosynthesis; 5-aminolevulinate from L-glutamyl-tRNA(Glu): step 1/2. Its function is as follows. Catalyzes the NADPH-dependent reduction of glutamyl-tRNA(Glu) to glutamate 1-semialdehyde (GSA). The sequence is that of Glutamyl-tRNA reductase from Pseudomonas putida (strain W619).